The following is a 384-amino-acid chain: Cell adhesion molecule CEACAM18 (384 aa).

Positions 1-30 (MDLSRPRWSLWRRVFLMASLLACGICQASG) are cleaved as a signal peptide. Residues Asn-108, Asn-112, Asn-121, Asn-162, and Asn-270 are each glycosylated (N-linked (GlcNAc...) asparagine). The region spanning 227-314 (PDYVLLRSNP…LIMYMDVRIQ (88 aa)) is the Ig-like C2-type domain. An intrachain disulfide couples Cys-255 to Cys-296. The segment at 358-384 (QPLLNQDKSGSMSVHPRPEDKTRRASR) is disordered. Polar residues predominate over residues 359 to 369 (PLLNQDKSGSM). Over residues 373 to 384 (PRPEDKTRRASR) the composition is skewed to basic and acidic residues.

This sequence belongs to the immunoglobulin superfamily. CEA family.

In Homo sapiens (Human), this protein is Cell adhesion molecule CEACAM18.